Consider the following 294-residue polypeptide: Elongation factor Ts (294 aa).

The interval 80-83 is involved in Mg(2+) ion dislocation from EF-Tu; sequence TDFV.

It belongs to the EF-Ts family.

It localises to the cytoplasm. Associates with the EF-Tu.GDP complex and induces the exchange of GDP to GTP. It remains bound to the aminoacyl-tRNA.EF-Tu.GTP complex up to the GTP hydrolysis stage on the ribosome. In Listeria monocytogenes serotype 4b (strain CLIP80459), this protein is Elongation factor Ts.